The following is a 33-amino-acid chain: Photosystem II reaction center protein Psb30 (33 aa).

The helical transmembrane segment at 5-25 threads the bilayer; it reads IVAQLTVLALIVVSGPLVIAL.

It belongs to the Psb30/Ycf12 family. As to quaternary structure, PSII is composed of 1 copy each of membrane proteins PsbA, PsbB, PsbC, PsbD, PsbE, PsbF, PsbH, PsbI, PsbJ, PsbK, PsbL, PsbM, PsbT, PsbX, PsbY, PsbZ, Psb30/Ycf12, peripheral proteins of the oxygen-evolving complex and a large number of cofactors. It forms dimeric complexes.

The protein localises to the plastid. The protein resides in the chloroplast thylakoid membrane. A core subunit of photosystem II (PSII), probably helps stabilize the reaction center. In Angiopteris evecta (Mule's foot fern), this protein is Photosystem II reaction center protein Psb30.